Reading from the N-terminus, the 344-residue chain is Cycloartenol-C-24-methyltransferase 1 (344 aa).

The protein belongs to the class I-like SAM-binding methyltransferase superfamily. Erg6/SMT family.

It carries out the reaction zymosterol + S-adenosyl-L-methionine = fecosterol + S-adenosyl-L-homocysteine + H(+). It participates in steroid biosynthesis; sterol biosynthesis. Its function is as follows. Catalyzes the methyl transfer from S-adenosyl-methionine to the C-24 of cycloartenol to form 24-methylene cycloartenol. This chain is Cycloartenol-C-24-methyltransferase 1 (Smt1-1), found in Oryza sativa subsp. japonica (Rice).